Here is a 650-residue protein sequence, read N- to C-terminus: Cytosolic Fe-S cluster assembly factor NAR1 (650 aa).

Cysteine 22, cysteine 81, cysteine 84, cysteine 87, cysteine 215, cysteine 270, cysteine 480, and cysteine 484 together coordinate [4Fe-4S] cluster.

The protein belongs to the NARF family.

Functionally, component of the cytosolic Fe/S protein assembly machinery. Required for maturation of extramitochondrial Fe/S proteins. May play a role in the transfer of pre-assembled Fe/S clusters to target apoproteins. This Cryptococcus neoformans var. neoformans serotype D (strain JEC21 / ATCC MYA-565) (Filobasidiella neoformans) protein is Cytosolic Fe-S cluster assembly factor NAR1 (NAR1).